We begin with the raw amino-acid sequence, 461 residues long: Probable metabolite transport protein CsbC (461 aa).

Over 1–14 (MKKDTRKYMIYFFG) the chain is Cytoplasmic. Residues 15–35 (ALGGLLYGYDTGVISGALLFI) traverse the membrane as a helical segment. The Extracellular portion of the chain corresponds to 36-38 (NND). A helical membrane pass occupies residues 39–59 (IPLTTLTEGLVVSMLLLGAIF). The Cytoplasmic portion of the chain corresponds to 60–76 (GSALSGTCSDRWGRRKV). A helical transmembrane segment spans residues 77-97 (VFVLSIIFIIGALACAFSQTI). Residues 98-104 (GMLIASR) are Extracellular-facing. The helical transmembrane segment at 105–125 (VILGLAVGGSTALVPVYLSEM) threads the bilayer. At 126 to 139 (APTKIRGTLGTMNN) the chain is on the cytoplasmic side. The helical transmembrane segment at 140-160 (LMIVTGILLAYIVNYLFTPFE) threads the bilayer. Residues 161-163 (AWR) lie on the Extracellular side of the membrane. The helical transmembrane segment at 164-184 (WMVGLAAVPAVLLLIGIAFMP) threads the bilayer. The Cytoplasmic segment spans residues 185–241 (ESPRWLVKRGSEEEARRIMNITHDPKDIEMELAEMKQGEAEKKETTLGVLKAKWIRP). Residues 242–262 (MLLIGVGLAIFQQAVGINTVI) traverse the membrane as a helical segment. At 263 to 280 (YYAPTIFTKAGLGTSASA) the chain is on the extracellular side. Residues 281 to 301 (LGTMGIGILNVIMCITAMILI) form a helical membrane-spanning segment. Topologically, residues 302–308 (DRVGRKK) are cytoplasmic. A helical transmembrane segment spans residues 309–329 (LLIWGSVGITLSLAALSGVLL). Over 330 to 341 (TLGLSASTAWMT) the chain is Extracellular. A helical membrane pass occupies residues 342 to 362 (VVFLGVYIVFYQATWGPVVWV). The Cytoplasmic portion of the chain corresponds to 363-378 (LMPELFPSKARGAATG). A helical membrane pass occupies residues 379–399 (FTTLVLSAANLIVSLVFPLML). The Extracellular portion of the chain corresponds to 400–402 (SAM). The chain crosses the membrane as a helical span at residues 403 to 423 (GIAWVFMVFSVICLLSFFFAF). Topologically, residues 424–461 (YMVPETKGKSLEEIEASLKKRFKKKKSTQNQVLNERTL) are cytoplasmic.

The protein belongs to the major facilitator superfamily. Sugar transporter (TC 2.A.1.1) family.

Its subcellular location is the cell membrane. Functionally, could serve either a nutritional or an osmotic protection function. This chain is Probable metabolite transport protein CsbC (csbC), found in Bacillus subtilis (strain 168).